The sequence spans 637 residues: Biosynthetic arginine decarboxylase (637 aa).

An N6-(pyridoxal phosphate)lysine modification is found at lysine 101. 286-296 (FDVGGGLAVDY) is a substrate binding site.

The protein belongs to the Orn/Lys/Arg decarboxylase class-II family. SpeA subfamily. Mg(2+) is required as a cofactor. Pyridoxal 5'-phosphate serves as cofactor.

The enzyme catalyses L-arginine + H(+) = agmatine + CO2. Its pathway is amine and polyamine biosynthesis; agmatine biosynthesis; agmatine from L-arginine: step 1/1. Catalyzes the biosynthesis of agmatine from arginine. The polypeptide is Biosynthetic arginine decarboxylase (Shewanella baltica (strain OS223)).